The following is a 662-amino-acid chain: MPPMQARTLSVYNVMVPLVCLLLFFSTPTHGLSDSEAILKFKESLVVGQENALASWNAKSPPCTWSGVLCNGGSVWRLQMENLELSGSIDIEALSGLTSLRTLSFMNNKFEGPFPDFKKLAALKSLYLSNNQFGGDIPGDAFEGMGWLKKVHLAQNKFTGQIPSSVAKLPKLLELRLDGNQFTGEIPEFEHQLHLLNLSNNALTGPIPESLSMTDPKVFEGNKGLYGKPLETECDSPYIEHPPQSEARPKSSSRGPLVITAIVAALTILIILGVIFLLNRSYKNKKPRLAVETGPSSLQKKTGIREADQSRRDRKKADHRKGSGTTKRMGAAAGVENTKLSFLREDREKFDLQDLLKASAEILGSGCFGASYKAVLSSGQMMVVKRFKQMNNAGRDEFQEHMKRLGRLMHHNLLSIVAYYYRKEEKLLVCDFAERGSLAINLHSNQSLGKPSLDWPTRLKIVKGVAKGLFYLHQDLPSLMAPHGHLKSSNVLLTKTFEPLLTDYGLIPLINQEKAQMHMAAYRSPEYLQHRRITKKTDVWGLGILILEILTGKFPANFSQSSEEDLASWVNSGFHGVWAPSLFDKGMGKTSHCEGQILKLLTIGLNCCEPDVEKRLDIGQAVEKIEELKEREGDDDDFYSTYVSETDGRSSKGESCESISFA.

The signal sequence occupies residues 1–31; the sequence is MPPMQARTLSVYNVMVPLVCLLLFFSTPTHG. Topologically, residues 32-256 are extracellular; it reads LSDSEAILKF…ARPKSSSRGP (225 aa). LRR repeat units lie at residues 79–98, 99–121, 122–144, 147–169, 171–191, and 192–214; these read QMEN…SGLT, SLRT…KKLA, ALKS…AFEG, WLKK…VAKL, KLLE…EFEH, and QLHL…LSMT. Residue Asn-197 is glycosylated (N-linked (GlcNAc...) asparagine). The disordered stretch occupies residues 233–253; that stretch reads ECDSPYIEHPPQSEARPKSSS. The chain crosses the membrane as a helical span at residues 257-277; that stretch reads LVITAIVAALTILIILGVIFL. At 278 to 662 the chain is on the cytoplasmic side; it reads LNRSYKNKKP…GESCESISFA (385 aa). The interval 288-330 is disordered; it reads RLAVETGPSSLQKKTGIREADQSRRDRKKADHRKGSGTTKRMG. Positions 357–639 constitute a Protein kinase domain; it reads KASAEILGSG…EREGDDDDFY (283 aa). Ser-359 carries the post-translational modification Phosphoserine. ATP contacts are provided by residues 363-371 and Lys-385; that span reads LGSGCFGAS. Ser-437 carries the phosphoserine modification. Thr-457 bears the Phosphothreonine mark. The residue at position 527 (Tyr-527) is a Phosphotyrosine. Positions 636–662 are disordered; that stretch reads DDFYSTYVSETDGRSSKGESCESISFA. A compositionally biased stretch (basic and acidic residues) spans 646 to 655; that stretch reads TDGRSSKGES.

Belongs to the protein kinase superfamily. Ser/Thr protein kinase family. As to quaternary structure, interacts in vitro with ROPGEF1 (via PRONE domain). In terms of tissue distribution, expressed in pollen and/or in flowers, but not in leaves.

Its subcellular location is the cell membrane. The catalysed reaction is L-seryl-[protein] + ATP = O-phospho-L-seryl-[protein] + ADP + H(+). The enzyme catalyses L-threonyl-[protein] + ATP = O-phospho-L-threonyl-[protein] + ADP + H(+). Its function is as follows. Receptor-like kinase involved in the control of pollen germination and pollen tube polar growth. This is Pollen receptor-like kinase 1 from Arabidopsis thaliana (Mouse-ear cress).